We begin with the raw amino-acid sequence, 139 residues long: uncharacterized protein (139 aa).

This is an uncharacterized protein from Saccharolobus islandicus (Sulfolobus islandicus).